The following is a 247-amino-acid chain: UPF0259 membrane protein BUAP5A_271 (247 aa).

6 consecutive transmembrane segments (helical) span residues Ile-20–Phe-40, Ile-85–Val-105, Ile-114–Leu-134, Phe-137–Leu-157, Ile-188–Ala-208, and Leu-218–Phe-238.

It belongs to the UPF0259 family.

It localises to the cell membrane. The polypeptide is UPF0259 membrane protein BUAP5A_271 (Buchnera aphidicola subsp. Acyrthosiphon pisum (strain 5A)).